A 159-amino-acid polypeptide reads, in one-letter code: Ribosomal RNA large subunit methyltransferase H (159 aa).

S-adenosyl-L-methionine is bound by residues Leu-76, Gly-108, and 127 to 132; that span reads FSKMTF.

The protein belongs to the RNA methyltransferase RlmH family. In terms of assembly, homodimer.

It localises to the cytoplasm. The catalysed reaction is pseudouridine(1915) in 23S rRNA + S-adenosyl-L-methionine = N(3)-methylpseudouridine(1915) in 23S rRNA + S-adenosyl-L-homocysteine + H(+). Specifically methylates the pseudouridine at position 1915 (m3Psi1915) in 23S rRNA. The chain is Ribosomal RNA large subunit methyltransferase H from Staphylococcus aureus (strain MSSA476).